Reading from the N-terminus, the 74-residue chain is U5-theraphotoxin-Cg1a (74 aa).

The first 19 residues, 1 to 19, serve as a signal peptide directing secretion; the sequence is MNATIFALLLLLNLAMYNA. A propeptide spanning residues 20–39 is cleaved from the precursor; it reads AEQSSETDMDDTLLIPENYR. Disulfide bonds link cysteine 42-cysteine 56, cysteine 49-cysteine 61, and cysteine 55-cysteine 71.

Belongs to the neurotoxin 36 family. 01 subfamily. In terms of tissue distribution, expressed by the venom gland.

It localises to the secreted. Functionally, probable ion channel inhibitor. This is U5-theraphotoxin-Cg1a from Chilobrachys guangxiensis (Chinese earth tiger tarantula).